The sequence spans 147 residues: Myosin-ID light chain (147 aa).

EF-hand domains follow at residues 8 to 43 (EAQS…LGQN), 79 to 114 (FDEK…LGER), and 115 to 147 (LPEE…MLKK). Ca(2+) contacts are provided by aspartate 21, asparagine 23, aspartate 25, lysine 27, and glutamate 32.

In terms of assembly, myosin I is a dimer of a heavy and a light chain. Inability to self-assemble into filaments. Interacts with myoD. Does not interact with myoB or myoC.

Its subcellular location is the cytoplasm. Functionally, functions as the light chain for myosin-D. Has low affinity for calcium. This is Myosin-ID light chain (mlcD) from Dictyostelium discoideum (Social amoeba).